A 266-amino-acid chain; its full sequence is Apolipoprotein A-I (266 aa).

An N-terminal signal peptide occupies residues 1–18 (MKAVVLTLAVLFLTGSQA). Tandem repeats lie at residues 67–88 (LKLL…EQIG) and 89–110 (PVTQ…QEMN). The interval 67–266 (LKLLDNWDTL…DEATKKLNAQ (200 aa)) is 10 X approximate tandem repeats. M109 carries the methionine sulfoxide modification. A 3; half-length repeat occupies 111–121 (KDLEEVKKKVQ). 5 tandem repeats follow at residues 122–143 (PYLD…QKVA), 144–165 (PLGA…EKLS), 166–187 (PLGE…AQLA), 188–209 (PYSD…EGGG), and 210–231 (AALA…EKAK). The 9; half-length repeat unit spans residues 232–242 (PALEDLRQGLL). The stretch at 243–266 (PVLESFRTSLLAAVDEATKKLNAQ) is repeat 10.

Belongs to the apolipoprotein A1/A4/E family. As to quaternary structure, homodimer. Interacts with APOA1BP and CLU. Component of a sperm activating protein complex (SPAP), consisting of APOA1, an immunoglobulin heavy chain, an immunoglobulin light chain and albumin. Interacts with NDRG1. Interacts with SCGB3A2. Interacts with NAXE and YJEFN3. In terms of processing, glycosylated. Palmitoylated. Post-translationally, phosphorylation sites are present in the extracellular medium.

It localises to the secreted. Participates in the reverse transport of cholesterol from tissues to the liver for excretion by promoting cholesterol efflux from tissues and by acting as a cofactor for the lecithin cholesterol acyltransferase (LCAT). As part of the SPAP complex, activates spermatozoa motility. The polypeptide is Apolipoprotein A-I (APOA1) (Odobenus rosmarus divergens (Pacific walrus)).